The chain runs to 34 residues: MEALVYTFLLVSTLGIIFFAIFFREPPKLPTKKN.

A helical transmembrane segment spans residues 3-23; it reads ALVYTFLLVSTLGIIFFAIFF.

The protein belongs to the PsbT family. PSII is composed of 1 copy each of membrane proteins PsbA, PsbB, PsbC, PsbD, PsbE, PsbF, PsbH, PsbI, PsbJ, PsbK, PsbL, PsbM, PsbT, PsbY, PsbZ, Psb30/Ycf12, at least 3 peripheral proteins of the oxygen-evolving complex and a large number of cofactors. It forms dimeric complexes.

It localises to the plastid. It is found in the chloroplast thylakoid membrane. Functionally, found at the monomer-monomer interface of the photosystem II (PS II) dimer, plays a role in assembly and dimerization of PSII. PSII is a light-driven water plastoquinone oxidoreductase, using light energy to abstract electrons from H(2)O, generating a proton gradient subsequently used for ATP formation. This is Photosystem II reaction center protein T from Atropa belladonna (Belladonna).